Here is a 161-residue protein sequence, read N- to C-terminus: NADH-quinone oxidoreductase subunit I (161 aa).

4Fe-4S ferredoxin-type domains lie at 53–82 (RRYP…IEAE) and 92–121 (TRYD…EGPN). Positions 62, 65, 68, 72, 101, 104, 107, and 111 each coordinate [4Fe-4S] cluster.

The protein belongs to the complex I 23 kDa subunit family. In terms of assembly, NDH-1 is composed of 14 different subunits. Subunits NuoA, H, J, K, L, M, N constitute the membrane sector of the complex. Requires [4Fe-4S] cluster as cofactor.

The protein localises to the cell inner membrane. It carries out the reaction a quinone + NADH + 5 H(+)(in) = a quinol + NAD(+) + 4 H(+)(out). Functionally, NDH-1 shuttles electrons from NADH, via FMN and iron-sulfur (Fe-S) centers, to quinones in the respiratory chain. The immediate electron acceptor for the enzyme in this species is believed to be ubiquinone. Couples the redox reaction to proton translocation (for every two electrons transferred, four hydrogen ions are translocated across the cytoplasmic membrane), and thus conserves the redox energy in a proton gradient. The sequence is that of NADH-quinone oxidoreductase subunit I from Hyphomonas neptunium (strain ATCC 15444).